The primary structure comprises 151 residues: D-aminoacyl-tRNA deacylase (151 aa).

A Gly-cisPro motif, important for rejection of L-amino acids motif is present at residues 137 to 138; that stretch reads GP.

This sequence belongs to the DTD family. Homodimer.

The protein localises to the cytoplasm. The catalysed reaction is glycyl-tRNA(Ala) + H2O = tRNA(Ala) + glycine + H(+). It catalyses the reaction a D-aminoacyl-tRNA + H2O = a tRNA + a D-alpha-amino acid + H(+). Functionally, an aminoacyl-tRNA editing enzyme that deacylates mischarged D-aminoacyl-tRNAs. Also deacylates mischarged glycyl-tRNA(Ala), protecting cells against glycine mischarging by AlaRS. Acts via tRNA-based rather than protein-based catalysis; rejects L-amino acids rather than detecting D-amino acids in the active site. By recycling D-aminoacyl-tRNA to D-amino acids and free tRNA molecules, this enzyme counteracts the toxicity associated with the formation of D-aminoacyl-tRNA entities in vivo and helps enforce protein L-homochirality. The sequence is that of D-aminoacyl-tRNA deacylase from Azoarcus sp. (strain BH72).